The sequence spans 372 residues: 4-hydroxybenzoate polyprenyltransferase, mitochondrial (372 aa).

A mitochondrion-targeting transit peptide spans 1 to 42 (MFIWQRKSILLGRSILGSGRVTVAGIIGSSRKRYTSSSSSSS). Helical transmembrane passes span 92-112 (PVGT…GAMM), 114-134 (GATL…ALVM), 171-191 (ALVF…LLPA), 193-213 (CWWL…FKRF), 229-249 (ALLG…PLYL), 298-318 (IALL…GFIG), and 352-372 (TGLY…FGFL).

Belongs to the UbiA prenyltransferase family. Mg(2+) serves as cofactor.

The protein resides in the mitochondrion inner membrane. The enzyme catalyses an all-trans-polyprenyl diphosphate + 4-hydroxybenzoate = a 4-hydroxy-3-(all-trans-polyprenyl)benzoate + diphosphate. Its pathway is cofactor biosynthesis; ubiquinone biosynthesis. Catalyzes the prenylation of para-hydroxybenzoate (PHB) with an all-trans polyprenyl group. Mediates the second step in the final reaction sequence of coenzyme Q (CoQ) biosynthesis, which is the condensation of the polyisoprenoid side chain with PHB, generating the first membrane-bound Q intermediate. The protein is 4-hydroxybenzoate polyprenyltransferase, mitochondrial of Saccharomyces cerevisiae (strain ATCC 204508 / S288c) (Baker's yeast).